Here is a 756-residue protein sequence, read N- to C-terminus: Catalase-peroxidase (756 aa).

The tryptophyl-tyrosyl-methioninium (Trp-Tyr) (with M-270) cross-link spans 91-244 (WHSAGTYRTG…LAAVQMGLIY (154 aa)). His92 (proton acceptor) is an active-site residue. The tract at residues 198-230 (AQKKMQQPGDGTLVAEPENHANEESRTASGERN) is disordered. Over residues 214–223 (PENHANEESR) the composition is skewed to basic and acidic residues. The segment at residues 244–270 (YVNPEGPEGVPDPVASARDIRETFGRM) is a cross-link (tryptophyl-tyrosyl-methioninium (Tyr-Met) (with W-91)). His285 lines the heme b pocket. A disordered region spans residues 371–390 (KNGAGAGKIPDAHDPSKRHA).

It belongs to the peroxidase family. Peroxidase/catalase subfamily. Homodimer or homotetramer. The cofactor is heme b. Formation of the three residue Trp-Tyr-Met cross-link is important for the catalase, but not the peroxidase activity of the enzyme.

It catalyses the reaction H2O2 + AH2 = A + 2 H2O. The enzyme catalyses 2 H2O2 = O2 + 2 H2O. Bifunctional enzyme with both catalase and broad-spectrum peroxidase activity. The sequence is that of Catalase-peroxidase from Pseudomonas syringae pv. tomato (strain ATCC BAA-871 / DC3000).